Here is a 459-residue protein sequence, read N- to C-terminus: F-box protein At1g47340 (459 aa).

Positions 31 to 76 constitute an F-box domain; it reads FMVSVSLPKELILEILKRLPAKSVKRFHCVSKQWASMLSCPHFREL. The disordered stretch occupies residues 434–459; it reads AKIEWEEEEEEDEDEDQEKEEEDQWS. Over residues 438–459 the composition is skewed to acidic residues; that stretch reads WEEEEEEDEDEDQEKEEEDQWS.

The polypeptide is F-box protein At1g47340 (Arabidopsis thaliana (Mouse-ear cress)).